The following is a 463-amino-acid chain: L-seryl-tRNA(Sec) selenium transferase (463 aa).

N6-(pyridoxal phosphate)lysine is present on K295.

Belongs to the SelA family. Homodecamer; pentamer of dimers. Binds only one seryl-tRNA(Sec) per dimer. Pyridoxal 5'-phosphate serves as cofactor.

It is found in the cytoplasm. The catalysed reaction is L-seryl-tRNA(Sec) + selenophosphate + H(+) = L-selenocysteinyl-tRNA(Sec) + phosphate. The protein operates within aminoacyl-tRNA biosynthesis; selenocysteinyl-tRNA(Sec) biosynthesis; selenocysteinyl-tRNA(Sec) from L-seryl-tRNA(Sec) (bacterial route): step 1/1. Its function is as follows. Converts seryl-tRNA(Sec) to selenocysteinyl-tRNA(Sec) required for selenoprotein biosynthesis. This is L-seryl-tRNA(Sec) selenium transferase from Escherichia coli (strain SMS-3-5 / SECEC).